The chain runs to 520 residues: Cobyric acid synthase (520 aa).

The GATase cobBQ-type domain maps to 254–465 (ELDIAVVRLP…IHGILDNDGL (212 aa)). Residue cysteine 335 is the Nucleophile of the active site. Histidine 457 is an active-site residue.

The protein belongs to the CobB/CobQ family. CobQ subfamily.

The protein operates within cofactor biosynthesis; adenosylcobalamin biosynthesis. In terms of biological role, catalyzes amidations at positions B, D, E, and G on adenosylcobyrinic A,C-diamide. NH(2) groups are provided by glutamine, and one molecule of ATP is hydrogenolyzed for each amidation. This is Cobyric acid synthase from Sorangium cellulosum (strain So ce56) (Polyangium cellulosum (strain So ce56)).